A 965-amino-acid chain; its full sequence is UvrABC system protein A (965 aa).

32–39 (GLSGSGKS) contacts ATP. The C4-type zinc-finger motif lies at 254–281 (CPVCDYSLPELEPRLFSFNAPMGACPAC). 2 ABC transporter domains span residues 311-588 (WDRR…PRSL) and 608-937 (PNAT…HFLA). Residue 641-648 (GVSGSGKS) participates in ATP binding. The C4-type zinc finger occupies 740–766 (CEACEGDGLIKVEMHFLPDVYVPCDVC).

The protein belongs to the ABC transporter superfamily. UvrA family. Forms a heterotetramer with UvrB during the search for lesions.

It localises to the cytoplasm. The UvrABC repair system catalyzes the recognition and processing of DNA lesions. UvrA is an ATPase and a DNA-binding protein. A damage recognition complex composed of 2 UvrA and 2 UvrB subunits scans DNA for abnormalities. When the presence of a lesion has been verified by UvrB, the UvrA molecules dissociate. This is UvrABC system protein A from Xylella fastidiosa (strain 9a5c).